A 226-amino-acid polypeptide reads, in one-letter code: Protein transport protein sec20 (226 aa).

The Cytoplasmic segment spans residues 1 to 189 (MADVLNALEE…IKSLKLSDRS (189 aa)). A coiled-coil region spans residues 53-75 (LRYEKAVQEYIRLNRRYRNKIAS). At Ser97 the chain carries Phosphoserine. A helical; Anchor for type IV membrane protein transmembrane segment spans residues 190-210 (DYFLVVSGFGFFIFVVVYLLF). The Lumenal segment spans residues 211–226 (KRIVWPILSMFLWFLR).

Belongs to the SEC20 family. In terms of assembly, component of a SNARE complex consisting of ufe1, sec20, sec22 and use1. Interacts with tip20 through its cytoplasmic domain.

The protein resides in the endoplasmic reticulum membrane. In terms of biological role, SNARE required for targeting and fusion of Golgi-derived retrograde transport vesicles with the ER. This Schizosaccharomyces pombe (strain 972 / ATCC 24843) (Fission yeast) protein is Protein transport protein sec20.